Here is a 913-residue protein sequence, read N- to C-terminus: Transient receptor potential cation channel protein painless (913 aa).

Over 1 to 490 (MDFNNCGFID…SSFLFLKWHR (490 aa)) the chain is Cytoplasmic. ANK repeat units lie at residues 154–189 (GEFT…DIDS), 260–289 (EYFG…DINS), and 368–397 (GRLV…YIGS). Residues 491–511 (LSVIFYLNFLIYSLFTASIIT) traverse the membrane as a helical segment. Residues 512-523 (YTLLKFHESDQR) lie on the Extracellular side of the membrane. The helical transmembrane segment at 524 to 544 (ALTAFFGLLSWLGISYLILRE) threads the bilayer. Residues 545 to 555 (CIQWIMSPVRY) lie on the Cytoplasmic side of the membrane. A helical membrane pass occupies residues 556-576 (FWSITNIMEVALITLSIFTCM). Topologically, residues 577–586 (ESSFDKETQR) are extracellular. The chain crosses the membrane as a helical span at residues 587–607 (VLAVFTILLVSMEFCLLVGSL). Residues 608-628 (PVLSISTHMLMLREVSNSFLK) are Cytoplasmic-facing. A helical membrane pass occupies residues 629-649 (SFTLYSIFVLTFSLCFYILFG). Residues 650-708 (KSVEEDQSKSATPCPPLGKKEGKDEEQGFNTFTKPIEAVIKTIVMLTGEFDAGSIQFTS) lie on the Extracellular side of the membrane. Residues 656 to 675 (QSKSATPCPPLGKKEGKDEE) form a disordered region. A helical transmembrane segment spans residues 709 to 729 (IYTYLIFLLFVIFMTIVLFNL). Over 730–913 (LNGLAVSDTQ…QLIQLVQDRK (184 aa)) the chain is Cytoplasmic.

It belongs to the transient receptor (TC 1.A.4) family. In terms of tissue distribution, present in multidendritic neurons, chordotonal neurons, a subset of cells in the central nervous system and a subset of sensory neurons in the antennal-maxillary complex. Not detected in gonads and dorsal vessels (at protein level). Expressed in peripheral neurons that extend multiple branched dendrites beneath the larval epidermis, similar to vertebrate pain receptors.

It localises to the membrane. Functionally, receptor-activated non-selective cation channel involved in detection of pain sensation due to high temperature. Involved in heat nociception by being activated by noxious temperature of 38 degrees Celsius. This Drosophila melanogaster (Fruit fly) protein is Transient receptor potential cation channel protein painless (pain).